We begin with the raw amino-acid sequence, 314 residues long: TPR repeat-containing protein MJ1345 (314 aa).

TPR repeat units follow at residues 12–45 (ESIL…RESP), 46–78 (DVYV…KPKY), 80–112 (LANF…EKSD), 114–146 (PVKY…YPKS), 147–180 (AIAW…NPKD), 182–214 (QSLL…NNKD), 215–248 (IRAL…NPDD), 249–282 (PLLY…NPNI), and 284–313 (DAWN…LDIY).

This is TPR repeat-containing protein MJ1345 from Methanocaldococcus jannaschii (strain ATCC 43067 / DSM 2661 / JAL-1 / JCM 10045 / NBRC 100440) (Methanococcus jannaschii).